The primary structure comprises 459 residues: UDP-N-acetylmuramoylalanine--D-glutamate ligase (459 aa).

131 to 137 (GANGKST) is an ATP binding site.

This sequence belongs to the MurCDEF family.

It is found in the cytoplasm. It catalyses the reaction UDP-N-acetyl-alpha-D-muramoyl-L-alanine + D-glutamate + ATP = UDP-N-acetyl-alpha-D-muramoyl-L-alanyl-D-glutamate + ADP + phosphate + H(+). It functions in the pathway cell wall biogenesis; peptidoglycan biosynthesis. Its function is as follows. Cell wall formation. Catalyzes the addition of glutamate to the nucleotide precursor UDP-N-acetylmuramoyl-L-alanine (UMA). The polypeptide is UDP-N-acetylmuramoylalanine--D-glutamate ligase (Methylococcus capsulatus (strain ATCC 33009 / NCIMB 11132 / Bath)).